Reading from the N-terminus, the 521-residue chain is Cytochrome P450 1A1 (521 aa).

Substrate is bound at residue phenylalanine 229. Cysteine 463 serves as a coordination point for heme.

This sequence belongs to the cytochrome P450 family. It depends on heme as a cofactor.

The protein resides in the endoplasmic reticulum membrane. It is found in the microsome membrane. The catalysed reaction is an organic molecule + reduced [NADPH--hemoprotein reductase] + O2 = an alcohol + oxidized [NADPH--hemoprotein reductase] + H2O + H(+). Cytochromes P450 are a group of heme-thiolate monooxygenases. They oxidize a variety of structurally unrelated compounds, including steroids, fatty acids, and xenobiotics. The chain is Cytochrome P450 1A1 (cyp1a1) from Platichthys flesus (European flounder).